Consider the following 131-residue polypeptide: D-ribose pyranase (131 aa).

The active-site Proton donor is the His20. Residues Asp28, His98, and 120–122 (YCN) contribute to the substrate site.

The protein belongs to the RbsD / FucU family. RbsD subfamily. Homodecamer.

It localises to the cytoplasm. It carries out the reaction beta-D-ribopyranose = beta-D-ribofuranose. The protein operates within carbohydrate metabolism; D-ribose degradation; D-ribose 5-phosphate from beta-D-ribopyranose: step 1/2. Functionally, catalyzes the interconversion of beta-pyran and beta-furan forms of D-ribose. The polypeptide is D-ribose pyranase (Coprothermobacter proteolyticus (strain ATCC 35245 / DSM 5265 / OCM 4 / BT)).